The chain runs to 315 residues: Glutamyl-Q tRNA(Asp) synthetase (315 aa).

Residues 12–16 (RFAPS) and Glu-48 contribute to the L-glutamate site. The 'HIGH' region motif lies at 15 to 25 (PSPSGPLHFGS). Zn(2+)-binding residues include Cys-104, Cys-106, Tyr-124, and Cys-128. Residues Tyr-181 and Arg-199 each contribute to the L-glutamate site. The short motif at 237-241 (KLSKQ) is the 'KMSKS' region element. Lys-240 contacts ATP.

It belongs to the class-I aminoacyl-tRNA synthetase family. GluQ subfamily. It depends on Zn(2+) as a cofactor.

Its function is as follows. Catalyzes the tRNA-independent activation of glutamate in presence of ATP and the subsequent transfer of glutamate onto a tRNA(Asp). Glutamate is transferred on the 2-amino-5-(4,5-dihydroxy-2-cyclopenten-1-yl) moiety of the queuosine in the wobble position of the QUC anticodon. The chain is Glutamyl-Q tRNA(Asp) synthetase from Aromatoleum aromaticum (strain DSM 19018 / LMG 30748 / EbN1) (Azoarcus sp. (strain EbN1)).